Consider the following 181-residue polypeptide: Crustacyanin-A1 subunit (181 aa).

3 cysteine pairs are disulfide-bonded: Cys-12–Cys-121, Cys-51–Cys-173, and Cys-117–Cys-150.

Belongs to the calycin superfamily. Lipocalin family. In terms of assembly, oligomer; Can form dimers (beta-crustacyanin); or complexes of 16 subunits (alpha-crustacyanin). There are five types of subunits: A1, A2, A3, C1 and C2. As to expression, found in the carapace.

Its subcellular location is the secreted. It localises to the extracellular space. Binds the carotenoid astaxanthin (AXT) which provides the blue coloration to the carapace of the lobster. The sequence is that of Crustacyanin-A1 subunit from Homarus gammarus (European lobster).